Reading from the N-terminus, the 527-residue chain is GMP synthase [glutamine-hydrolyzing] (527 aa).

Residues 11–209 (RILILDFGSQ…VLNICGCENL (199 aa)) form the Glutamine amidotransferase type-1 domain. Residue C88 is the Nucleophile of the active site. Residues H183 and E185 contribute to the active site. Positions 210–402 (WTSANIIEDA…LGLPYNMLYR (193 aa)) constitute a GMPS ATP-PPase domain. 237-243 (SGGVDSS) is an ATP binding site.

As to quaternary structure, homodimer.

The enzyme catalyses XMP + L-glutamine + ATP + H2O = GMP + L-glutamate + AMP + diphosphate + 2 H(+). Its pathway is purine metabolism; GMP biosynthesis; GMP from XMP (L-Gln route): step 1/1. Catalyzes the synthesis of GMP from XMP. This Photobacterium profundum (strain SS9) protein is GMP synthase [glutamine-hydrolyzing].